Here is a 136-residue protein sequence, read N- to C-terminus: MVAAAAVAVAAVGARSAGRWLAALRSPGASRAAMSSDAQWLTAEERDQLIPGLKAAGWSELSERDAIYKEFSFKNFNQAFGFMSRVALQAEKMNHHPEWFNVYNKVQITLTSHDCGGLTKRDVKLAQFIEKAAASL.

Residues K120, K124, and K131 each carry the N6-acetyllysine; alternate modification. N6-succinyllysine; alternate occurs at positions 120, 124, and 131.

This sequence belongs to the pterin-4-alpha-carbinolamine dehydratase family. Homotetramer. Interacts with DYRK1B.

The catalysed reaction is (4aS,6R)-4a-hydroxy-L-erythro-5,6,7,8-tetrahydrobiopterin = (6R)-L-erythro-6,7-dihydrobiopterin + H2O. Involved in tetrahydrobiopterin biosynthesis. Seems to both prevent the formation of 7-pterins and accelerate the formation of quinonoid-BH2. Its function is as follows. Regulates the dimerization of homeodomain protein HNF-1-alpha and enhances its transcriptional activity. The chain is Pterin-4-alpha-carbinolamine dehydratase 2 (Pcbd2) from Mus musculus (Mouse).